A 159-amino-acid polypeptide reads, in one-letter code: Protein-export protein SecB (159 aa).

Belongs to the SecB family. Homotetramer, a dimer of dimers. One homotetramer interacts with 1 SecA dimer.

It is found in the cytoplasm. One of the proteins required for the normal export of preproteins out of the cell cytoplasm. It is a molecular chaperone that binds to a subset of precursor proteins, maintaining them in a translocation-competent state. It also specifically binds to its receptor SecA. The chain is Protein-export protein SecB from Pseudomonas fluorescens (strain SBW25).